The following is a 62-amino-acid chain: Large ribosomal subunit protein bL28 (62 aa).

The segment at 1 to 22 is disordered; it reads MAKKCAISGKGPMSGNNVSHAK.

This sequence belongs to the bacterial ribosomal protein bL28 family.

In Sulfurimonas denitrificans (strain ATCC 33889 / DSM 1251) (Thiomicrospira denitrificans (strain ATCC 33889 / DSM 1251)), this protein is Large ribosomal subunit protein bL28.